A 221-amino-acid polypeptide reads, in one-letter code: MTEKIGVLGKKTTQRTDVERIVVTPLPTVYGKFRAFGYFDHERGDEQVALVHGDLGAEDVLTRLHSECLTGDAFGSQHCECGAQLASALRQVADAGSGIVVYLRGHEGRGIGLLAKLRAMALQAEGLDTVEANLALGLPVDARDYGVAARILDDLGVRSVRLMSNNPRKREALVRHGIRVAEQVPLLIPPCESNITYLRTKRERLDHHLPHLDAAMAHVSS.

63–67 (RLHSE) lines the GTP pocket. Residues Cys68, Cys79, and Cys81 each coordinate Zn(2+). Residues Gln84, 107-109 (EGR), and Thr129 contribute to the GTP site. Catalysis depends on Asp141, which acts as the Proton acceptor. The active-site Nucleophile is the Arg143. GTP contacts are provided by Ser164 and Lys169.

Belongs to the GTP cyclohydrolase II family. The cofactor is Zn(2+).

The catalysed reaction is GTP + 4 H2O = 2,5-diamino-6-hydroxy-4-(5-phosphoribosylamino)-pyrimidine + formate + 2 phosphate + 3 H(+). It participates in cofactor biosynthesis; riboflavin biosynthesis; 5-amino-6-(D-ribitylamino)uracil from GTP: step 1/4. In terms of biological role, catalyzes the conversion of GTP to 2,5-diamino-6-ribosylamino-4(3H)-pyrimidinone 5'-phosphate (DARP), formate and pyrophosphate. The protein is GTP cyclohydrolase-2 of Streptomyces coelicolor (strain ATCC BAA-471 / A3(2) / M145).